We begin with the raw amino-acid sequence, 447 residues long: Chitobiosyldiphosphodolichol beta-mannosyltransferase (447 aa).

Residues 1 to 2 (MT) lie on the Cytoplasmic side of the membrane. Residues 3–23 (LVLLLSIFAICFSSVAFIQLL) form a helical; Signal-anchor for type II membrane protein membrane-spanning segment. Topologically, residues 24 to 447 (PTRREKKSSE…IAGTFLGLVT (424 aa)) are lumenal.

Belongs to the glycosyltransferase group 1 family. Glycosyltransferase 33 subfamily.

It localises to the endoplasmic reticulum membrane. The enzyme catalyses an N,N'-diacetylchitobiosyl-diphospho-di-trans,poly-cis-dolichol + GDP-alpha-D-mannose = a beta-D-Man-(1-&gt;4)-beta-D-GlcNAc-(1-&gt;4)-alpha-D-GlcNAc-diphospho-di-trans,poly-cis-dolichol + GDP + H(+). The protein operates within protein modification; protein glycosylation. Its function is as follows. Participates in the formation of the lipid-linked precursor oligosaccharide for N-glycosylation. Involved in assembling the dolichol-pyrophosphate-GlcNAc(2)-Man(5) intermediate on the cytoplasmic surface of the ER. This Arthroderma benhamiae (strain ATCC MYA-4681 / CBS 112371) (Trichophyton mentagrophytes) protein is Chitobiosyldiphosphodolichol beta-mannosyltransferase.